Consider the following 575-residue polypeptide: uncharacterized protein (575 aa).

The tract at residues alanine 507–lysine 536 is disordered.

This is an uncharacterized protein from Ostreid herpesvirus 1 (isolate France) (OsHV-1).